The sequence spans 312 residues: MKVAVLGAAGGIGQALALLLKNQLPSGSELSLYDIAPVTPGVAVDLSHIPTAVKIKGFSGEDATPALEGADVVLISAGVARKPGMDRSDLFNVNAGIVKNLVQQIAKTCPKACVGIITNPVNTTVAIAAEVLKKAGVYDKNKLFGVTTLDIIRSNTFVAELKGKLPTEVEVPVIGGHSGVTILPLLSQIPGVSFTEQEAAELTKRIQNAGTEVVEAKAGGGSATLSMGQAAARFGLSLVRALQGEKGVVECAYVEGDGQYARFFSQPLLLGKNGVEERKSIGTLSAFEQHSLDAMLYTLKKDIQLGEDFINK.

Residues 7 to 13 (GAAGGIG) and Asp34 contribute to the NAD(+) site. Substrate-binding residues include Arg81 and Arg87. NAD(+) contacts are provided by residues Asn94 and 117-119 (ITN). Substrate contacts are provided by Asn119 and Arg153. Catalysis depends on His177, which acts as the Proton acceptor. Residue Met227 coordinates NAD(+).

This sequence belongs to the LDH/MDH superfamily. MDH type 1 family. Homodimer.

It carries out the reaction (S)-malate + NAD(+) = oxaloacetate + NADH + H(+). Functionally, catalyzes the reversible oxidation of malate to oxaloacetate. The chain is Malate dehydrogenase from Salmonella gallinarum (strain 287/91 / NCTC 13346).